Here is a 37-residue protein sequence, read N- to C-terminus: Brevinin-2DYe (37 aa).

Cysteine 31 and cysteine 37 are disulfide-bonded.

As to expression, expressed by the skin glands.

It localises to the secreted. In terms of biological role, antimicrobial peptide. Active against the Gram-positive bacterium S.aureus (MIC=15 uM) and the Gram-negative bacterium E.coli (MIC=30 uM). The sequence is that of Brevinin-2DYe from Rana dybowskii (Dybovsky's frog).